Here is a 347-residue protein sequence, read N- to C-terminus: MDKTKALDAALSQIERSFGKGSIMRLGQKEQVVEIETIPTGSLSLDIALGVGGLPKGRIVEIYGPESSGKTTLALHAIAEAQKNGGVCAFIDAEHALDPIYARKLGVDLENLFISQPDTGEQALEITETLVRSGAVDVLVVDSVAALTPRAEIDGEMGDALPGLQARLMSKALRKLTASIFRSNCMVIFINQIRMKIGVMFGSPETTTGGNALKFYASVRLDIRRVGSIKDRDMIVGNQTRVKVVKNKLAPPFKQVEFDIIYGEGISKLGELIDLGVKVGIVEKSGSWFSYNSQRLGQGRENAKQFLREHAEIATEIETALRQNAGLIAIELLENAGSENTESNEAI.

64–71 (GPESSGKT) serves as a coordination point for ATP.

Belongs to the RecA family.

Its subcellular location is the cytoplasm. Functionally, can catalyze the hydrolysis of ATP in the presence of single-stranded DNA, the ATP-dependent uptake of single-stranded DNA by duplex DNA, and the ATP-dependent hybridization of homologous single-stranded DNAs. It interacts with LexA causing its activation and leading to its autocatalytic cleavage. In Bartonella quintana (strain Toulouse) (Rochalimaea quintana), this protein is Protein RecA.